Consider the following 1430-residue polypeptide: DNA-directed RNA polymerase subunit beta' (1430 aa).

Residues Cys70, Cys72, Cys85, and Cys88 each contribute to the Zn(2+) site. Residues Asp495, Asp497, and Asp499 each coordinate Mg(2+). Positions 838, 912, 919, and 922 each coordinate Zn(2+).

This sequence belongs to the RNA polymerase beta' chain family. As to quaternary structure, the RNAP catalytic core consists of 2 alpha, 1 beta, 1 beta' and 1 omega subunit. When a sigma factor is associated with the core the holoenzyme is formed, which can initiate transcription. It depends on Mg(2+) as a cofactor. Zn(2+) serves as cofactor.

It catalyses the reaction RNA(n) + a ribonucleoside 5'-triphosphate = RNA(n+1) + diphosphate. Its function is as follows. DNA-dependent RNA polymerase catalyzes the transcription of DNA into RNA using the four ribonucleoside triphosphates as substrates. This Rhodospirillum centenum (strain ATCC 51521 / SW) protein is DNA-directed RNA polymerase subunit beta'.